A 308-amino-acid polypeptide reads, in one-letter code: Acetylglutamate kinase (308 aa).

Residues Gly67–Gly68, Arg89, and Asn193 each bind substrate.

It belongs to the acetylglutamate kinase family. ArgB subfamily.

It is found in the cytoplasm. The enzyme catalyses N-acetyl-L-glutamate + ATP = N-acetyl-L-glutamyl 5-phosphate + ADP. Its pathway is amino-acid biosynthesis; L-arginine biosynthesis; N(2)-acetyl-L-ornithine from L-glutamate: step 2/4. Functionally, catalyzes the ATP-dependent phosphorylation of N-acetyl-L-glutamate. This chain is Acetylglutamate kinase, found in Nitratidesulfovibrio vulgaris (strain DP4) (Desulfovibrio vulgaris).